We begin with the raw amino-acid sequence, 195 residues long: tRNA (pseudouridine(54)-N(1))-methyltransferase (195 aa).

L129 serves as a coordination point for S-adenosyl-L-methionine.

This sequence belongs to the methyltransferase superfamily. TrmY family. Homodimer.

It localises to the cytoplasm. It carries out the reaction pseudouridine(54) in tRNA + S-adenosyl-L-methionine = N(1)-methylpseudouridine(54) in tRNA + S-adenosyl-L-homocysteine + H(+). Its function is as follows. Specifically catalyzes the N1-methylation of pseudouridine at position 54 (Psi54) in tRNAs. The protein is tRNA (pseudouridine(54)-N(1))-methyltransferase of Methanocorpusculum labreanum (strain ATCC 43576 / DSM 4855 / Z).